A 362-amino-acid polypeptide reads, in one-letter code: Phosphoglycolate phosphatase 1B, chloroplastic (362 aa).

A chloroplast-targeting transit peptide spans 1–54; that stretch reads MLSRSVASAVTPVSSSSLLPNSKPIFCLKTLSGYRSSSFCGGCIRKINHKPLRM. Residue threonine 55 is modified to N-acetylthreonine. The active-site Nucleophile is glutamate 80. Serine 356 is modified (phosphoserine).

Belongs to the HAD-like hydrolase superfamily. CbbY/CbbZ/Gph/YieH family.

It localises to the plastid. It is found in the chloroplast. The enzyme catalyses 2-phosphoglycolate + H2O = glycolate + phosphate. Its function is as follows. Photorespiratory enzyme that dephosphorylates the 2-phosphoglycolate produced by the RuBisCO oxygenation reaction. The protein is Phosphoglycolate phosphatase 1B, chloroplastic (PGLP1B) of Arabidopsis thaliana (Mouse-ear cress).